The sequence spans 389 residues: Mesotocin receptor (389 aa).

Residues 1–50 lie on the Extracellular side of the membrane; it reads MEGLCLNLDCSELPNSSWVNSSMENQNHSSNSTRDPLKRNEEVAKVEVTV. N-linked (GlcNAc...) asparagine glycosylation is found at Asn-15, Asn-20, Asn-27, and Asn-31. A helical transmembrane segment spans residues 51–71; that stretch reads LALILFLALAGNICVLLGIYI. Residues 72–87 are Cytoplasmic-facing; the sequence is NRHKHSRMYFFMKHLS. The chain crosses the membrane as a helical span at residues 88–108; the sequence is IADLVVAIFQVLPQLIWDITF. Topologically, residues 109–119 are extracellular; sequence RFYAPDLVCRL. Cys-117 and Cys-192 are disulfide-bonded. Residues 120-140 form a helical membrane-spanning segment; it reads VTYLQVVGMFASTYMLLLMSL. At 141 to 159 the chain is on the cytoplasmic side; sequence DRCLAICQPLRSLHRRSDC. A helical transmembrane segment spans residues 160-180; that stretch reads VYVLFTWILSFLLSTPQTVIF. At 181-207 the chain is on the extracellular side; that stretch reads SLTEVGNGVYDCRADFIQPWGPKAYIT. Residues 208–228 traverse the membrane as a helical segment; sequence WITLAVYIIPVMILSVCYGLI. The Cytoplasmic segment spans residues 229 to 275; it reads SYKIWQNIRLKTVCESNLRLSTSRRATLSRVSSVRLISKAKIRTVKM. The helical transmembrane segment at 276–296 threads the bilayer; it reads TFIIVLAYIVCWTPFFFVQMW. The Extracellular portion of the chain corresponds to 297–308; that stretch reads SVWDPNPPKEAS. Residues 309-329 form a helical membrane-spanning segment; it reads LFIIAMLLGSLNSCCNPWIYM. Residues 330–389 are Cytoplasmic-facing; sequence LFTGHLFHDLLQSFLCCSARYLKTQQQGSDLSASRKSNSSTFVLSRKSSSQKSITQPSTA. Positions 360 to 389 are disordered; it reads LSASRKSNSSTFVLSRKSSSQKSITQPSTA.

Belongs to the G-protein coupled receptor 1 family. Vasopressin/oxytocin receptor subfamily. As to expression, highly expressed in the bladder. Also expressed in kidney, brain and skeletal muscle.

It is found in the cell membrane. Functionally, binds to mesotocin and may play a role in the regulation of water and salt transport. In Rhinella marina (Cane toad), this protein is Mesotocin receptor.